Reading from the N-terminus, the 833-residue chain is ERAD-associated E3 ubiquitin-protein ligase component HRD3 (833 aa).

Positions 1 to 20 (MITLLLYLCVICNAIVLIRA) are cleaved as a signal peptide. 3 N-linked (GlcNAc...) asparagine glycosylation sites follow: N101, N123, and N142. One copy of the Sel1-like 1 repeat lies at 103 to 139 (SEATYTLSQIHLWSQYNFPHNMTLAHKYLEKFNDLTH). 6 Sel1-like repeats span residues 143 to 186 (HSAI…QLGN), 187 to 222 (LKAK…EQLR), 413 to 445 (GRAC…KTQA), 552 to 595 (ETAQ…KQGN), 596 to 627 (IDAG…LKYS), and 628 to 663 (IQAI…EHDH). N-linked (GlcNAc...) asparagine glycosylation occurs at N429. N-linked (GlcNAc...) asparagine glycosylation is present at N611. A helical transmembrane segment spans residues 768–788 (LVTMGCILGIFLLSILMSTLA). The disordered stretch occupies residues 805–824 (NGNRQQEQQQQQQAQGPPGW). Over residues 809–819 (QQEQQQQQQAQ) the composition is skewed to low complexity.

It belongs to the sel-1 family. In terms of assembly, component of the HRD1 ubiquitin ligase complex which contains the E3 ligase HRD1, its cofactors HRD3, USA1 and DER1, substrate recruiting factor YOS9 and CDC48-binding protein UBX2. Within the complex, interacts directly with HRD1 and YOS9 (via N-terminus). In ERAD-L, HRD3 and YOS9 jointly bind misfolded glycoproteins in the endoplasmic reticulum (ER) lumen. Movement of ERAD-L substrates through the ER membrane is facilitated by HRD1 and DER1 which have lateral gates facing each other and which distort the membrane region between the lateral gates, making it much thinner than a normal phospholipid bilayer. Substrates insert into the membrane as a hairpin loop with one strand interacting with DER1 and the other with HRD1. The HRD1 complex interacts with the heterotrimeric CDC48-NPL4-UFD1 ATPase complex which is recruited by UBX2 via its interaction with CDC48 and which moves ubiquitinated substrates to the cytosol for targeting to the proteasome. The HRD1 complex interacts with the ERAD substrates HMG1 and HMG2. Interacts with KAR2.

It localises to the endoplasmic reticulum membrane. Component of the endoplasmic reticulum quality control (ERQC) system involved in ubiquitin-dependent degradation of misfolded endoplasmic reticulum proteins. Component of the HRD1 ubiquitin ligase complex, which is part of the ERAD-L and ERAD-M pathways responsible for the rapid degradation of soluble lumenal and membrane proteins with misfolded lumenal domains (ERAD-L), or ER-membrane proteins with misfolded transmembrane domains (ERAD-M). ERAD-L substrates are ubiquitinated through HRD1 in conjunction with the E2 ubiquitin-conjugating enzymes UBC1 and UBC7-CUE1. Ubiquitinated substrates are then removed to the cytosol via the action of the CDC48-NPL4-UFD1 ATPase complex and targeted to the proteasome. ERAD-M substrates are processed by the same HRD1-HRD3 core complex, but only a subset of the other components is required for ERAD-M. Stabilizes the HRD1 ubiquitin-protein ligase. Also functions in recruiting misfolded protein substrates in conjunction with YOS9. This Saccharomyces cerevisiae (strain ATCC 204508 / S288c) (Baker's yeast) protein is ERAD-associated E3 ubiquitin-protein ligase component HRD3 (HRD3).